Consider the following 421-residue polypeptide: MAESWLRLCGAGPGEEAGPEGGMEEPDALDDSLTSLQWLQEFSILNAKAPTLPPGGTDPLGYHQVPGLVAPGSPLAADPACLGQPHTPGKPTSSCTSRSAPPGLQAPPPDDVDYATNPHVKPPYSYATLICMAMQASKATKITLSAIYKWITDNFCYFRHADPTWQNSIRHNLSLNKCFIKVPREKDEPGKGGFWRIDPQYAERLLSGAFKKRRLPPVHIHPAFARQAAQEPSTAPWGGPLTVNREAQQLLQEFEEATGEGGWGTGEGRLGHKRKQPLPKRVAKVLRPPSTLLLTQEEQGELEPLKGNFDWEAIFEAGALGEELSSLEGLELSPPLSPSSHGEVDLTVHGRHINCPATWGPPVEQATDSLDFDETFLATSFLQHPWDESSSGCLPPEPLFEAGDATLAADLQDWASVGAFL.

2 disordered regions span residues 1–32 and 79–110; these read MAES…LDDS and PACL…PPPD. Positions 11–21 are enriched in gly residues; the sequence is AGPGEEAGPEG. Residues 90-99 are compositionally biased toward polar residues; it reads KPTSSCTSRS. The fork-head DNA-binding region spans 120–210; sequence VKPPYSYATL…YAERLLSGAF (91 aa). The tract at residues 256–277 is disordered; that stretch reads EATGEGGWGTGEGRLGHKRKQP. Gly residues predominate over residues 259–268; it reads GEGGWGTGEG.

Belongs to the FOXJ1 family. Pulmonary epithelium, testis and oviduct.

Its subcellular location is the nucleus. Transcription factor specifically required for the formation of motile cilia. Acts by activating transcription of genes that mediate assembly of motile cilia, such as CFAP157. Binds the DNA consensus sequences 5'-HWDTGTTTGTTTA-3' or 5'-KTTTGTTGTTKTW-3' (where H is not G, W is A or T, D is not C, and K is G or T). Activates the transcription of a variety of ciliary proteins in the developing brain and lung. In Rattus norvegicus (Rat), this protein is Forkhead box protein J1 (Foxj1).